A 1201-amino-acid polypeptide reads, in one-letter code: Autophagy-related protein 11 (1201 aa).

Residues 90-109 are disordered; the sequence is FPFLGRPSTPTKGSDNSTGT. A compositionally biased stretch (polar residues) spans 97 to 109; sequence STPTKGSDNSTGT. Positions 418-452 form a coiled coil; it reads LLRSDDMVRSLRDEKSKLEEKVKGSESRIRKLEDL. Disordered stretches follow at residues 458–503 and 525–545; these read HMGR…SEEK and KLQKDAHAERQSNTDKIQEVQ. Residues 485-499 are compositionally biased toward low complexity; sequence RRSSVSSRRMSSNQS. Positions 525–542 are enriched in basic and acidic residues; it reads KLQKDAHAERQSNTDKIQ. Coiled coils occupy residues 566 to 670 and 710 to 828; these read RRFL…ALQA and SAKA…WKER. Disordered stretches follow at residues 1052–1076 and 1115–1201; these read SMNGANPDRRSIGEASDGTSFDDEN and DARG…LQGP. The span at 1133–1166 shows a compositional bias: polar residues; the sequence is RTLSKSLDSRRNSSNSKKGPATPSQRGNDSTTDL. Positions 1191–1201 are enriched in basic and acidic residues; sequence EEVRRDQLQGP.

The protein belongs to the ATG11 family. As to quaternary structure, homodimer and potential homooligomers.

The protein localises to the preautophagosomal structure membrane. Its function is as follows. Selective autophagy-specific protein required for pexophagy and mitophagy. In contrast to its Saccharomyces cerevisiae ATG11 ortholog, is not involved in non-selective autophagy nor in cytoplasm to vacuole transport (Cvt). This Aspergillus oryzae (strain ATCC 42149 / RIB 40) (Yellow koji mold) protein is Autophagy-related protein 11.